The following is a 555-amino-acid chain: TBCC domain-containing protein 1 (555 aa).

In terms of domain architecture, C-CAP/cofactor C-like spans 302-433; it reads PEVSPMVIMS…LEDHMAQVGL (132 aa).

This sequence belongs to the TBCC family.

It is found in the cytoplasm. It localises to the cytoskeleton. The protein resides in the microtubule organizing center. The protein localises to the centrosome. Its subcellular location is the spindle pole. In terms of biological role, may play a role in the regulation of centrosome and Golgi apparatus positioning. This chain is TBCC domain-containing protein 1 (TBCCD1), found in Gallus gallus (Chicken).